The following is a 547-amino-acid chain: Chaperonin GroEL (547 aa).

ATP contacts are provided by residues 29–32 (TLGP), 86–90 (DGTTT), Gly413, 478–480 (DVL), and Asp494.

Belongs to the chaperonin (HSP60) family. In terms of assembly, forms a cylinder of 14 subunits composed of two heptameric rings stacked back-to-back. Interacts with the co-chaperonin GroES.

Its subcellular location is the cytoplasm. It carries out the reaction ATP + H2O + a folded polypeptide = ADP + phosphate + an unfolded polypeptide.. In terms of biological role, together with its co-chaperonin GroES, plays an essential role in assisting protein folding. The GroEL-GroES system forms a nano-cage that allows encapsulation of the non-native substrate proteins and provides a physical environment optimized to promote and accelerate protein folding. This Alkaliphilus metalliredigens (strain QYMF) protein is Chaperonin GroEL.